The sequence spans 413 residues: Serine hydroxymethyltransferase (413 aa).

Residues leucine 117 and 121–123 (GHL) each bind (6S)-5,6,7,8-tetrahydrofolate. Lysine 226 carries the N6-(pyridoxal phosphate)lysine modification. Residues glutamate 239 and 349–351 (SPF) contribute to the (6S)-5,6,7,8-tetrahydrofolate site.

The protein belongs to the SHMT family. Homodimer. Pyridoxal 5'-phosphate is required as a cofactor.

Its subcellular location is the cytoplasm. The enzyme catalyses (6R)-5,10-methylene-5,6,7,8-tetrahydrofolate + glycine + H2O = (6S)-5,6,7,8-tetrahydrofolate + L-serine. The protein operates within one-carbon metabolism; tetrahydrofolate interconversion. Its pathway is amino-acid biosynthesis; glycine biosynthesis; glycine from L-serine: step 1/1. Functionally, catalyzes the reversible interconversion of serine and glycine with tetrahydrofolate (THF) serving as the one-carbon carrier. This reaction serves as the major source of one-carbon groups required for the biosynthesis of purines, thymidylate, methionine, and other important biomolecules. Also exhibits THF-independent aldolase activity toward beta-hydroxyamino acids, producing glycine and aldehydes, via a retro-aldol mechanism. This chain is Serine hydroxymethyltransferase, found in Bacillus cereus (strain AH187).